Consider the following 237-residue polypeptide: DNA repair protein RecO (237 aa).

The protein belongs to the RecO family.

Its function is as follows. Involved in DNA repair and RecF pathway recombination. The sequence is that of DNA repair protein RecO from Rickettsia felis (strain ATCC VR-1525 / URRWXCal2) (Rickettsia azadi).